The following is a 95-amino-acid chain: Aspartyl/glutamyl-tRNA(Asn/Gln) amidotransferase subunit C (95 aa).

It belongs to the GatC family. In terms of assembly, heterotrimer of A, B and C subunits.

It carries out the reaction L-glutamyl-tRNA(Gln) + L-glutamine + ATP + H2O = L-glutaminyl-tRNA(Gln) + L-glutamate + ADP + phosphate + H(+). The enzyme catalyses L-aspartyl-tRNA(Asn) + L-glutamine + ATP + H2O = L-asparaginyl-tRNA(Asn) + L-glutamate + ADP + phosphate + 2 H(+). Functionally, allows the formation of correctly charged Asn-tRNA(Asn) or Gln-tRNA(Gln) through the transamidation of misacylated Asp-tRNA(Asn) or Glu-tRNA(Gln) in organisms which lack either or both of asparaginyl-tRNA or glutaminyl-tRNA synthetases. The reaction takes place in the presence of glutamine and ATP through an activated phospho-Asp-tRNA(Asn) or phospho-Glu-tRNA(Gln). This Chromohalobacter salexigens (strain ATCC BAA-138 / DSM 3043 / CIP 106854 / NCIMB 13768 / 1H11) protein is Aspartyl/glutamyl-tRNA(Asn/Gln) amidotransferase subunit C.